Consider the following 386-residue polypeptide: Myosin light chain kinase family member 4 (386 aa).

Position 100 is a phosphoserine (Ser100). A Protein kinase domain is found at 107–361 (VSKSEILGGG…ASEALKHPWL (255 aa)). ATP is bound by residues 113–121 (LGGGRFGQV) and Lys136. Asp227 serves as the catalytic Proton acceptor.

It belongs to the protein kinase superfamily. CAMK Ser/Thr protein kinase family.

The catalysed reaction is L-seryl-[protein] + ATP = O-phospho-L-seryl-[protein] + ADP + H(+). The enzyme catalyses L-threonyl-[protein] + ATP = O-phospho-L-threonyl-[protein] + ADP + H(+). This chain is Myosin light chain kinase family member 4 (Mylk4), found in Mus musculus (Mouse).